A 31-amino-acid chain; its full sequence is Cytochrome b6-f complex subunit 6 (31 aa).

Residues 4–24 (VISYFGFLLVALAFTLVTYLG) traverse the membrane as a helical segment.

The protein belongs to the PetL family. The 4 large subunits of the cytochrome b6-f complex are cytochrome b6, subunit IV (17 kDa polypeptide, PetD), cytochrome f and the Rieske protein, while the 4 small subunits are PetG, PetL, PetM and PetN. The complex functions as a dimer.

It localises to the plastid. It is found in the chloroplast thylakoid membrane. Its function is as follows. Component of the cytochrome b6-f complex, which mediates electron transfer between photosystem II (PSII) and photosystem I (PSI), cyclic electron flow around PSI, and state transitions. PetL is important for photoautotrophic growth as well as for electron transfer efficiency and stability of the cytochrome b6-f complex. The polypeptide is Cytochrome b6-f complex subunit 6 (Nephroselmis olivacea (Green alga)).